An 863-amino-acid chain; its full sequence is Leucine--tRNA ligase (863 aa).

Positions 41-51 match the 'HIGH' region motif; the sequence is PYPSGRIHIGH. The 'KMSKS' region motif lies at 627–631; the sequence is KMSKS. Lysine 630 contacts ATP.

This sequence belongs to the class-I aminoacyl-tRNA synthetase family.

It is found in the cytoplasm. The catalysed reaction is tRNA(Leu) + L-leucine + ATP = L-leucyl-tRNA(Leu) + AMP + diphosphate. The chain is Leucine--tRNA ligase from Jannaschia sp. (strain CCS1).